The following is a 172-amino-acid chain: Spore coat protein X (172 aa).

It localises to the spore coat. This Bacillus subtilis (strain 168) protein is Spore coat protein X (cotX).